Consider the following 702-residue polypeptide: Polyribonucleotide nucleotidyltransferase (702 aa).

Mg(2+) is bound by residues aspartate 485 and aspartate 491. A KH domain is found at 552–611 (PRITTLKINPEKIRDVIGKGGATIRALTEETGTTIELEDDGTVKIASANGEATKEAIRRI). In terms of domain architecture, S1 motif spans 621–689 (GTVYNGKVVR…RQGRVRLSMK (69 aa)).

It belongs to the polyribonucleotide nucleotidyltransferase family. In terms of assembly, component of the RNA degradosome, which is a multiprotein complex involved in RNA processing and mRNA degradation. Mg(2+) is required as a cofactor.

The protein localises to the cytoplasm. It carries out the reaction RNA(n+1) + phosphate = RNA(n) + a ribonucleoside 5'-diphosphate. Functionally, involved in mRNA degradation. Catalyzes the phosphorolysis of single-stranded polyribonucleotides processively in the 3'- to 5'-direction. The chain is Polyribonucleotide nucleotidyltransferase from Shewanella woodyi (strain ATCC 51908 / MS32).